Reading from the N-terminus, the 122-residue chain is MAEPGGRGDYRKDGRLPSLSRSPLSTTLGTSPACGLEIPPTSGARPDGSCSLPAPVYHLKSRQWKGMGRGYRQRWRLQGRGDCDMGCVVQASGLFPAEMRERTTKKMATSPLDLCAGACWEM.

A compositionally biased stretch (basic and acidic residues) spans 1-15; that stretch reads MAEPGGRGDYRKDGR. The disordered stretch occupies residues 1 to 49; it reads MAEPGGRGDYRKDGRLPSLSRSPLSTTLGTSPACGLEIPPTSGARPDGS. A compositionally biased stretch (low complexity) spans 16-32; that stretch reads LPSLSRSPLSTTLGTSP.

This is an uncharacterized protein from Homo sapiens (Human).